Reading from the N-terminus, the 351-residue chain is MSPPKRFQINAKNYFLTYPRCSLTKEEALSQIRNFQTPTNPKFIKICRELHENGEPHLHVLIQFEGKYKCQNQRFFDLVSPTRSAHFHPNIQGAKSSSDVKSYIDKDGDTWRWGTFQIDGRSARGGQQSANDAYAAALNSGSKSEALKILRELAPRDYLRDFHHISSNLDRIFTKPPPPYENPFPLSSFDRVPEELDEWFHENVMGRARPLRPKSIVIEGDSRTGKTMWSRALGPHNYLCGHLDLSPKVYNNDAWYNVIDDVDPHYLKHFKRIHGGPEDWQSNTKYGKPVQIKGGIPTIFLCNPGPNSSYKEFLDEEKNSALKAWALKNATFISLEGPLYSGTNQGPTQSC.

The CRESS-DNA virus Rep endonuclease domain occupies 8–116; that stretch reads QINAKNYFLT…DGDTWRWGTF (109 aa). The short motif at 15–18 is the RCR-1 element; the sequence is FLTY. A divalent metal cation-binding residues include glutamate 49, histidine 57, and histidine 59. Residues 57 to 59 carry the RCR-2 motif; the sequence is HLH. The active-site For DNA cleavage activity is the tyrosine 103. The RCR-3 motif lies at 103–106; the sequence is YIDK. Aspartate 107 lines the a divalent metal cation pocket. The interval 143 to 153 is binding to RBR1; that stretch reads KSEALKILREL. Residues 156–176 are oligomerization; that stretch reads RDYLRDFHHISSNLDRIFTKP. 220–227 provides a ligand contact to ATP; sequence GDSRTGKT.

Belongs to the geminiviridae Rep protein family. In terms of assembly, homooligomer. Interacts with the replication enhancer protein (REn). Interacts with host retinoblastoma-related protein 1 (RBR1), and may thereby induce the transcription of host replicative enzymes even if the cell is not dividing anymore. Interacts with host PCNA. Interacts with host SCE1 protein. Requires Mg(2+) as cofactor. It depends on Mn(2+) as a cofactor.

It localises to the host nucleus. Essential for the replication of viral ssDNA. The closed circular ssDNA genome is first converted to a superhelical dsDNA. Rep binds a specific region at the genome origin of replication. It introduces an endonucleolytic nick within the conserved sequence 5'-TAATATTAC-3' in the intergenic region of the genome present in all geminiviruses, thereby initiating the rolling circle replication (RCR). Following cleavage, binds covalently to the 5'-phosphate of DNA as a tyrosyl ester. The cleavage gives rise to a free 3'-OH that serves as a primer for the cellular DNA polymerase. The polymerase synthesizes the (+) strand DNA by rolling circle mechanism. After one round of replication, a Rep-catalyzed nucleotidyl transfer reaction releases a circular single-stranded virus genome, thereby terminating the replication. Displays origin-specific DNA cleavage, nucleotidyl transferase, ATPase and helicase activities. This is Replication-associated protein from Manihot esculenta (Cassava).